The chain runs to 230 residues: Chalcone--flavanone isomerase (230 aa).

Residues T52, N117, and S194 each coordinate substrate.

It belongs to the chalcone isomerase family.

The catalysed reaction is a chalcone = a flavanone.. It participates in secondary metabolite biosynthesis; flavonoid biosynthesis. Catalyzes the intramolecular cyclization of bicyclic chalcones into tricyclic (S)-flavanones. Responsible for the isomerization of 4,2',4',6'-tetrahydroxychalcone (also termed chalcone) into naringenin. This is Chalcone--flavanone isomerase (CHI) from Camellia sinensis (Tea plant).